The chain runs to 449 residues: ATP-dependent protease ATPase subunit HslU (449 aa).

ATP is bound by residues Ile-18, 60-65, Asp-261, Glu-327, and Arg-399; that span reads GVGKTE.

Belongs to the ClpX chaperone family. HslU subfamily. As to quaternary structure, a double ring-shaped homohexamer of HslV is capped on each side by a ring-shaped HslU homohexamer. The assembly of the HslU/HslV complex is dependent on binding of ATP.

It is found in the cytoplasm. Functionally, ATPase subunit of a proteasome-like degradation complex; this subunit has chaperone activity. The binding of ATP and its subsequent hydrolysis by HslU are essential for unfolding of protein substrates subsequently hydrolyzed by HslV. HslU recognizes the N-terminal part of its protein substrates and unfolds these before they are guided to HslV for hydrolysis. The protein is ATP-dependent protease ATPase subunit HslU of Oleidesulfovibrio alaskensis (strain ATCC BAA-1058 / DSM 17464 / G20) (Desulfovibrio alaskensis).